The chain runs to 302 residues: UDP-N-acetylenolpyruvoylglucosamine reductase (302 aa).

One can recognise an FAD-binding PCMH-type domain in the interval 32–195 (LGGPADLLAR…VTVTLELVPD (164 aa)). R175 is a catalytic residue. S224 serves as the catalytic Proton donor. Residue E294 is part of the active site.

It belongs to the MurB family. The cofactor is FAD.

The protein resides in the cytoplasm. It carries out the reaction UDP-N-acetyl-alpha-D-muramate + NADP(+) = UDP-N-acetyl-3-O-(1-carboxyvinyl)-alpha-D-glucosamine + NADPH + H(+). It functions in the pathway cell wall biogenesis; peptidoglycan biosynthesis. In terms of biological role, cell wall formation. The sequence is that of UDP-N-acetylenolpyruvoylglucosamine reductase from Moorella thermoacetica (strain ATCC 39073 / JCM 9320).